A 375-amino-acid polypeptide reads, in one-letter code: Thiamine-phosphate synthase (375 aa).

Residues Met1–Gln127 are unknown. The thiamine-phosphate synthase stretch occupies residues Cys128–Asp375. Residues Gln183–Arg185 and Asn215 contribute to the 4-amino-2-methyl-5-(diphosphooxymethyl)pyrimidine site. Residues Asp216 and Glu235 each contribute to the Mg(2+) site. Residues Ser254 and Lys283 each coordinate 4-amino-2-methyl-5-(diphosphooxymethyl)pyrimidine. Gly315 is a binding site for 2-[(2R,5Z)-2-carboxy-4-methylthiazol-5(2H)-ylidene]ethyl phosphate.

Belongs to the thiamine-phosphate synthase family. Mg(2+) is required as a cofactor.

The catalysed reaction is 2-[(2R,5Z)-2-carboxy-4-methylthiazol-5(2H)-ylidene]ethyl phosphate + 4-amino-2-methyl-5-(diphosphooxymethyl)pyrimidine + 2 H(+) = thiamine phosphate + CO2 + diphosphate. The enzyme catalyses 2-(2-carboxy-4-methylthiazol-5-yl)ethyl phosphate + 4-amino-2-methyl-5-(diphosphooxymethyl)pyrimidine + 2 H(+) = thiamine phosphate + CO2 + diphosphate. It carries out the reaction 4-methyl-5-(2-phosphooxyethyl)-thiazole + 4-amino-2-methyl-5-(diphosphooxymethyl)pyrimidine + H(+) = thiamine phosphate + diphosphate. It participates in cofactor biosynthesis; thiamine diphosphate biosynthesis; thiamine phosphate from 4-amino-2-methyl-5-diphosphomethylpyrimidine and 4-methyl-5-(2-phosphoethyl)-thiazole: step 1/1. In terms of biological role, condenses 4-methyl-5-(beta-hydroxyethyl)thiazole monophosphate (THZ-P) and 2-methyl-4-amino-5-hydroxymethyl pyrimidine pyrophosphate (HMP-PP) to form thiamine monophosphate (TMP). The chain is Thiamine-phosphate synthase (thiE) from Rhodopirellula baltica (strain DSM 10527 / NCIMB 13988 / SH1).